The following is a 130-amino-acid chain: Small ribosomal subunit protein uS11 (130 aa).

Belongs to the universal ribosomal protein uS11 family. As to quaternary structure, part of the 30S ribosomal subunit. Interacts with proteins S7 and S18. Binds to IF-3.

Functionally, located on the platform of the 30S subunit, it bridges several disparate RNA helices of the 16S rRNA. Forms part of the Shine-Dalgarno cleft in the 70S ribosome. The protein is Small ribosomal subunit protein uS11 of Prochlorococcus marinus subsp. pastoris (strain CCMP1986 / NIES-2087 / MED4).